The sequence spans 37 residues: Large ribosomal subunit protein bL36 (37 aa).

The protein belongs to the bacterial ribosomal protein bL36 family.

The protein is Large ribosomal subunit protein bL36 of Aromatoleum aromaticum (strain DSM 19018 / LMG 30748 / EbN1) (Azoarcus sp. (strain EbN1)).